The sequence spans 490 residues: Cytochrome P450 2C6 (490 aa).

N6-acetyllysine is present on residues lysine 249 and lysine 375. Residue cysteine 435 coordinates heme.

Belongs to the cytochrome P450 family. Heme is required as a cofactor.

The protein resides in the endoplasmic reticulum membrane. The protein localises to the microsome membrane. It catalyses the reaction an organic molecule + reduced [NADPH--hemoprotein reductase] + O2 = an alcohol + oxidized [NADPH--hemoprotein reductase] + H2O + H(+). Functionally, cytochromes P450 are a group of heme-thiolate monooxygenases. In liver microsomes, this enzyme is involved in an NADPH-dependent electron transport pathway. It oxidizes a variety of structurally unrelated compounds, including steroids, fatty acids, and xenobiotics. This is Cytochrome P450 2C6 (Cyp2c6) from Rattus norvegicus (Rat).